Reading from the N-terminus, the 154-residue chain is Pro-corazonin (154 aa).

A signal peptide spans 1-19 (MLRLLLLPLFLFTLSMCMG). Q20 carries the post-translational modification Pyrrolidone carboxylic acid. An Asparagine amide modification is found at N30. The propeptide occupies 70–154 (LERCLSQLQR…SAEPNVFGKH (85 aa)).

This sequence belongs to the corazonin family. Expression is restricted to 24 neurons in the larval CNS (8 in the brain and 16 in the ventral nerve cord) and 12-16 neurons in the pars lateralis of the adult brain.

Its subcellular location is the secreted. Cardioactive peptide. Corazonin is probably involved in the physiological regulation of the heart beat. Clock (Clk) and cycle (cyc) proteins negatively regulate Crz transcription in a cell-specific manner. This is Pro-corazonin (Crz) from Drosophila simulans (Fruit fly).